Consider the following 286-residue polypeptide: L-cysteine S-thiosulfotransferase subunit SoxA (286 aa).

Positions 1 to 26 are cleaved as a signal peptide; it reads MTVSKRFLAPVFAMVGGLVLAFSANA. The Cytochrome c domain maps to 80 to 166; the sequence is LAVERGADIW…ALTSYIKHQS (87 aa). The heme site is built by cysteine 100, cysteine 103, histidine 104, cysteine 138, cysteine 202, cysteine 205, and histidine 206. Arginine 243 serves as a coordination point for substrate. Cysteine 247 serves as a coordination point for heme. The active-site Cysteine persulfide intermediate is the cysteine 247.

This sequence belongs to the SoxA family. As to quaternary structure, heterodimer of SoxA and SoxX. Heme is required as a cofactor. Post-translationally, cysteine persulfide at Cys-247.

It is found in the periplasm. The catalysed reaction is L-cysteinyl-[SoxY protein] + thiosulfate + 2 Fe(III)-[cytochrome c] = S-sulfosulfanyl-L-cysteinyl-[SoxY protein] + 2 Fe(II)-[cytochrome c] + 2 H(+). It carries out the reaction S-sulfanyl-L-cysteinyl-[SoxY protein] + thiosulfate + 2 Fe(III)-[cytochrome c] = S-(2-sulfodisulfanyl)-L-cysteinyl-[SoxY protein] + 2 Fe(II)-[cytochrome c] + 2 H(+). In terms of biological role, C-type diheme cytochrome, which is part of the SoxAX cytochrome complex involved in sulfur oxidation. The SoxAX complex catalyzes the formation of a heterodisulfide bond between the conserved cysteine residue on a sulfur carrier SoxYZ complex subunit SoxY and thiosulfate or other inorganic sulfur substrates. This leads to the liberation of two electrons, which may be transferred from the SoxAX complex to another cytochrome c that then channels them into the respiratory electron transport chain. Some electrons may be used for reductive CO(2) fixation. The polypeptide is L-cysteine S-thiosulfotransferase subunit SoxA (Pseudaminobacter salicylatoxidans).